The primary structure comprises 375 residues: 23S rRNA (uracil(747)-C(5))-methyltransferase RlmC (375 aa).

[4Fe-4S] cluster-binding residues include C3, C11, C14, and C87. Positions 212, 241, 262, and 307 each coordinate S-adenosyl-L-methionine. C334 functions as the Nucleophile in the catalytic mechanism.

It belongs to the class I-like SAM-binding methyltransferase superfamily. RNA M5U methyltransferase family. RlmC subfamily.

The enzyme catalyses uridine(747) in 23S rRNA + S-adenosyl-L-methionine = 5-methyluridine(747) in 23S rRNA + S-adenosyl-L-homocysteine + H(+). Its function is as follows. Catalyzes the formation of 5-methyl-uridine at position 747 (m5U747) in 23S rRNA. In Escherichia coli O157:H7, this protein is 23S rRNA (uracil(747)-C(5))-methyltransferase RlmC.